The following is a 519-amino-acid chain: 2-isopropylmalate synthase (519 aa).

Residues 5–267 (VKIFDTTLRD…NTNIRSHEIS (263 aa)) form the Pyruvate carboxyltransferase domain. Residues Asp-14, His-202, His-204, and Asn-238 each contribute to the Mn(2+) site. The regulatory domain stretch occupies residues 392-519 (KLLYLQASSG…KKQQTQTAGV (128 aa)).

The protein belongs to the alpha-IPM synthase/homocitrate synthase family. LeuA type 1 subfamily. As to quaternary structure, homodimer. Mn(2+) serves as cofactor.

Its subcellular location is the cytoplasm. The catalysed reaction is 3-methyl-2-oxobutanoate + acetyl-CoA + H2O = (2S)-2-isopropylmalate + CoA + H(+). It participates in amino-acid biosynthesis; L-leucine biosynthesis; L-leucine from 3-methyl-2-oxobutanoate: step 1/4. Functionally, catalyzes the condensation of the acetyl group of acetyl-CoA with 3-methyl-2-oxobutanoate (2-ketoisovalerate) to form 3-carboxy-3-hydroxy-4-methylpentanoate (2-isopropylmalate). The sequence is that of 2-isopropylmalate synthase from Pseudoalteromonas atlantica (strain T6c / ATCC BAA-1087).